The following is a 190-amino-acid chain: dTTP/UTP pyrophosphatase (190 aa).

Residue Asp71 is the Proton acceptor of the active site.

The protein belongs to the Maf family. YhdE subfamily. It depends on a divalent metal cation as a cofactor.

It localises to the cytoplasm. It catalyses the reaction dTTP + H2O = dTMP + diphosphate + H(+). The catalysed reaction is UTP + H2O = UMP + diphosphate + H(+). Nucleoside triphosphate pyrophosphatase that hydrolyzes dTTP and UTP. May have a dual role in cell division arrest and in preventing the incorporation of modified nucleotides into cellular nucleic acids. In Xanthomonas campestris pv. campestris (strain ATCC 33913 / DSM 3586 / NCPPB 528 / LMG 568 / P 25), this protein is dTTP/UTP pyrophosphatase.